The chain runs to 1101 residues: Serine/threonine-protein kinase PSK2 (1101 aa).

Thr118 is subject to Phosphothreonine. The region spanning 841-1099 (FTILQVMGEG…IDEIYEDKWL (259 aa)) is the Protein kinase domain. ATP is bound by residues 847 to 855 (MGEGAYGKV) and Lys870. Residue Asp975 is the Proton acceptor of the active site.

Belongs to the protein kinase superfamily. Ser/Thr protein kinase family.

The protein resides in the cytoplasm. The enzyme catalyses L-seryl-[protein] + ATP = O-phospho-L-seryl-[protein] + ADP + H(+). It carries out the reaction L-threonyl-[protein] + ATP = O-phospho-L-threonyl-[protein] + ADP + H(+). Serine/threonine-protein kinase involved in the control of sugar metabolism and translation. Phosphorylates UGP1, which is required for normal glycogen and beta-(1,6)-glucan synthesis. This phosphorylation shifts glucose partitioning toward cell wall glucan synthesis at the expense of glycogen synthesis. Also phosphorylates the glycogen synthase GSY2 and the translation factors CAF20, TIF11 and SRO9. This Saccharomyces cerevisiae (strain ATCC 204508 / S288c) (Baker's yeast) protein is Serine/threonine-protein kinase PSK2 (PSK2).